The following is a 2464-amino-acid chain: Nonribosomal peptide synthetase NPS2 (2464 aa).

An adenylation 1 region spans residues 275-670 (DDHHPGTSQP…GRIDTQIKLR (396 aa)). Residues 814–888 (TKAEGQLLEI…QIAKALDASS (75 aa)) form the Carrier 1 domain. An O-(pantetheine 4'-phosphoryl)serine modification is found at Ser-848. Positions 924-1325 (IYPPFPLQEG…EGLALDLAQG (402 aa)) are condensation 1. The region spanning 1364–1437 (EDLLLRLRKI…RMAASAGKKI (74 aa)) is the Carrier 2 domain. O-(pantetheine 4'-phosphoryl)serine is present on Ser-1398. Positions 1479 to 1887 (DVFPVTTLQA…LRVLVDDLDA (409 aa)) are condensation 2. A Carrier 3 domain is found at 1917–1993 (SSWDEKSSTL…DLVMRAGAED (77 aa)). Position 1954 is an O-(pantetheine 4'-phosphoryl)serine (Ser-1954). Residues 2047–2340 (GGSRYQHVFG…ATQIQDDLRE (294 aa)) form a condensation 3 region.

The protein belongs to the NRP synthetase family.

It functions in the pathway siderophore biosynthesis. In terms of biological role, nonribosomal peptide synthetase; part of the siderophore basidioferrin biosynthetic pathway. The biosynthesis of basidioferrin depends on the hydroxylation of ornithine to N(5)-hydroxyornithine, catalyzed by the monooxygenase SMO1. The second step, the acylation of N(5)-hydroxy-L-ornithine is catalyzed by a not yet identified N-acyltransferase. Finally, assembly of basidioferrin is catalyzed by the nonribosomal peptide synthase (NRPS) NPS2 via amide bond formation between three L-AHO molecules to release the linear L-AHO trimer. N-5-acetyl-N-5-hydroxy-L-ornithine (L-AHO) and N-5-cis-anhydromevalonyl-N-5-hydroxy-L-ornithine (L-AMHO) are accepted as the substrates by the NPS2 adenylation (A) domain, but only L-AHO is trimerized. This chain is Nonribosomal peptide synthetase NPS2, found in Ceriporiopsis subvermispora (strain B) (White-rot fungus).